The chain runs to 466 residues: MASEGDKLWGGRFSGSTDPIMEMLNSSIACDQRLSEVDIQGSMAYAKALEKAGILTKTELEKILSGLEKISEEWSKGVFVVKQSDEDIHTANERRLKELIGDIAGKLHTGRSRNDQVVTDLKLLLKSSISVISTHLLQLIKTLVERAATEIDVIMPGYTHLQKALPIRWSQFLLSHAVALIRDSERLGEVKKRMSVLPLGSGALAGNPLEIDRELLRSELDFASISLNSMDAISERDFVVELLSVATLLMIHLSKLAEDLIIFSTTEFGFVTLSDAYSTGSSLLPQKKNPDSLELIRSKAGRVFGRLAAVLMVLKGLPSTYNKDLQEDKEAVFDVVDTLTAVLQVATGVISTLQVNKENMEKALTPELLSTDLALYLVRKGMPFRQAHVASGKAVHLAETKGIAINKLTLEDLKSISPLFASDVSQVFNIVNSVEQYTAVGGTAKSSVTAQIEQLRELLKKQKEQA.

Positions 27, 114, and 159 each coordinate 2-(N(omega)-L-arginino)succinate. Residue histidine 160 is the Proton acceptor of the active site. Serine 281 acts as the Proton donor in catalysis. Residues asparagine 289, tyrosine 321, glutamine 326, and lysine 329 each contribute to the 2-(N(omega)-L-arginino)succinate site.

It belongs to the lyase 1 family. Argininosuccinate lyase subfamily. In terms of assembly, homotetramer. Eye lens.

The enzyme catalyses 2-(N(omega)-L-arginino)succinate = fumarate + L-arginine. The protein operates within amino-acid biosynthesis; L-arginine biosynthesis; L-arginine from L-ornithine and carbamoyl phosphate: step 3/3. Its function is as follows. Delta crystallin, the principal crystallin in embryonic lens, is found only in birds and reptiles. This protein may also function as an enzymatically active argininosuccinate lyase. This chain is Argininosuccinate lyase (ASL2), found in Gallus gallus (Chicken).